The sequence spans 160 residues: Large ribosomal subunit protein uL18 (160 aa).

It belongs to the universal ribosomal protein uL18 family. In terms of assembly, part of the 50S ribosomal subunit. Contacts the 5S and 23S rRNAs.

Its function is as follows. This is one of the proteins that bind and probably mediate the attachment of the 5S RNA into the large ribosomal subunit, where it forms part of the central protuberance. This is Large ribosomal subunit protein uL18 from Thermoplasma volcanium (strain ATCC 51530 / DSM 4299 / JCM 9571 / NBRC 15438 / GSS1).